We begin with the raw amino-acid sequence, 429 residues long: Probable M18 family aminopeptidase 2 (429 aa).

Zn(2+) contacts are provided by histidine 82, histidine 156, and histidine 401.

Belongs to the peptidase M18 family. Requires Zn(2+) as cofactor.

This Pseudomonas putida (strain ATCC 47054 / DSM 6125 / CFBP 8728 / NCIMB 11950 / KT2440) protein is Probable M18 family aminopeptidase 2.